Consider the following 331-residue polypeptide: Glycerol-3-phosphate dehydrogenase [NAD(P)+] (331 aa).

3 residues coordinate NADPH: Trp14, Arg34, and Lys107. Sn-glycerol 3-phosphate contacts are provided by Lys107, Gly135, and Ser137. Ala139 serves as a coordination point for NADPH. Sn-glycerol 3-phosphate is bound by residues Lys190, Asp243, Ser253, Arg254, and Asn255. The Proton acceptor role is filled by Lys190. NADPH is bound at residue Arg254. NADPH is bound by residues Val278 and Glu280.

This sequence belongs to the NAD-dependent glycerol-3-phosphate dehydrogenase family.

It localises to the cytoplasm. It catalyses the reaction sn-glycerol 3-phosphate + NAD(+) = dihydroxyacetone phosphate + NADH + H(+). The catalysed reaction is sn-glycerol 3-phosphate + NADP(+) = dihydroxyacetone phosphate + NADPH + H(+). The protein operates within membrane lipid metabolism; glycerophospholipid metabolism. In terms of biological role, catalyzes the reduction of the glycolytic intermediate dihydroxyacetone phosphate (DHAP) to sn-glycerol 3-phosphate (G3P), the key precursor for phospholipid synthesis. The sequence is that of Glycerol-3-phosphate dehydrogenase [NAD(P)+] from Caulobacter vibrioides (strain ATCC 19089 / CIP 103742 / CB 15) (Caulobacter crescentus).